The primary structure comprises 325 residues: MEEERDHNASESSLPSLSKQLESSTLGGSAVDVPVVDLSVSDEDFLVREVVKASEEWGVFQVVNHGIPTELMRQLQMVGTQFFELPDAEKETVAKEEDFEGYKKNYLGGINNWDEHLFHRLSPPSIINYKYWPKNPPQYREVTEEYTKHMKRLTEKILGWLSEGLGLQRETFTQSIGGDTAEYVLRVNFYPPTQDTELVIGAAAHSDMGAIALLIPNEVPGLQAFKDEQWLDLDYIDSAVVVIIGDQLMRMTNGRLKNVLHRAKSDKDKLRISWPVFVAPRADMSVGPLPEFTGDENPPKFETLIYNDYIDQKIRGWALEDLPVY.

Residues 1-21 (MEEERDHNASESSLPSLSKQL) form a disordered region. Polar residues predominate over residues 10–21 (SESSLPSLSKQL). The Fe2OG dioxygenase domain maps to 180–280 (TAEYVLRVNF…RISWPVFVAP (101 aa)). Residue 188–190 (NFY) participates in 2-oxoglutarate binding. Fe cation contacts are provided by H205, D207, and H261. Residue 271–273 (RIS) participates in 2-oxoglutarate binding.

The protein belongs to the iron/ascorbate-dependent oxidoreductase family. It depends on Fe(2+) as a cofactor. As to expression, expressed in young seedlings.

The catalysed reaction is a (2R,3R)-dihydroflavonol + 2-oxoglutarate + O2 = a flavonol + succinate + CO2 + H2O. It participates in secondary metabolite biosynthesis; flavonoid biosynthesis. This is Probable flavonol synthase 5 (FLS5) from Arabidopsis thaliana (Mouse-ear cress).